Here is a 570-residue protein sequence, read N- to C-terminus: Enhancer of polycomb-like protein 1 (570 aa).

The segment at 541–570 is disordered; it reads ALNNLNSGQTSGQTMGSNPGPGAIAPTPET. Residues 543–557 are compositionally biased toward polar residues; the sequence is NNLNSGQTSGQTMGS.

The protein belongs to the enhancer of polycomb family. In terms of assembly, component of the NuA4 histone acetyltransferase complex.

The protein localises to the nucleus. Component of the NuA4 histone acetyltransferase complex which is involved in transcriptional activation of selected genes principally by acetylation of nucleosomal histone H4 and H2A. The NuA4 complex is also involved in DNA repair. Involved in gene silencing by neighboring heterochromatin, blockage of the silencing spreading along the chromosome, and required for cell cycle progression through G2/M. The chain is Enhancer of polycomb-like protein 1 (epl1) from Emericella nidulans (strain FGSC A4 / ATCC 38163 / CBS 112.46 / NRRL 194 / M139) (Aspergillus nidulans).